The following is a 264-amino-acid chain: Undecaprenyl-diphosphatase (264 aa).

The next 8 membrane-spanning stretches (helical) occupy residues 7–27 (VVIL…SSGH), 39–59 (LPIV…MIYY), 89–109 (ILLI…IEMF), 112–132 (LFTL…LFLL), 145–165 (ILLA…PGIS), 182–202 (SESF…SLLL), 212–232 (MLFS…VGLF), and 244–264 (SKLY…YFLF).

Belongs to the UppP family.

The protein localises to the cell inner membrane. The catalysed reaction is di-trans,octa-cis-undecaprenyl diphosphate + H2O = di-trans,octa-cis-undecaprenyl phosphate + phosphate + H(+). Its function is as follows. Catalyzes the dephosphorylation of undecaprenyl diphosphate (UPP). Confers resistance to bacitracin. This is Undecaprenyl-diphosphatase from Borrelia hermsii (strain HS1 / DAH).